The following is an 867-amino-acid chain: Cadherin-related family member 1 (867 aa).

Residues 1 to 21 (MKHEWNLCPSIFFSIFHICLS) form the signal peptide. The Extracellular portion of the chain corresponds to 22–707 (VQTNYGPYFF…SKDNPMKALG (686 aa)). Cadherin domains lie at 39 to 138 (NGNM…SPGF), 139 to 250 (LNTP…PPVF), 251 to 357 (VGTP…PPTF), 363 to 476 (PQNR…VPRF), 477 to 580 (SSEY…SPEF), and 572 to 692 (DIND…GPMA). The chain crosses the membrane as a helical span at residues 708–728 (VLAGVMAIMVVITIFISTAMF). The Cytoplasmic segment spans residues 729-867 (WRNKKSNRVM…KNAGSSMSFY (139 aa)). The interval 777–825 (EMESGPKNENRNNNYQGIPVPPRAPCPPPPPRLMPKVSKTERSLPTVSG) is disordered. Over residues 795–809 (PVPPRAPCPPPPPRL) the composition is skewed to pro residues.

In terms of tissue distribution, expressed in photoreceptor cells of the outer nuclear layer of the retina and in the pinal gland.

The protein resides in the membrane. Its function is as follows. Potential calcium-dependent cell-adhesion protein. The chain is Cadherin-related family member 1 (cdhr1) from Xenopus laevis (African clawed frog).